Reading from the N-terminus, the 241-residue chain is Probable transcriptional regulatory protein lmo1535 (241 aa).

Polar residues predominate over residues Met-1 to Lys-14. Residues Met-1–Ser-22 are disordered.

It belongs to the TACO1 family.

It is found in the cytoplasm. The protein is Probable transcriptional regulatory protein lmo1535 of Listeria monocytogenes serovar 1/2a (strain ATCC BAA-679 / EGD-e).